The chain runs to 311 residues: Protein YIPF2 (311 aa).

A2 carries the N-acetylalanine modification. Residues 2-120 (AAADDLAFHE…LRNRPDLYGP (119 aa)) are Cytoplasmic-facing. A helical membrane pass occupies residues 121-141 (FWICATLAFVLAVTGNLTLVL). Residues 142-159 (AQRRDPSIHYSPQFHKVT) are Lumenal-facing. Residues 160–180 (IAGITIYCYAWLVPLALWGFL) traverse the membrane as a helical segment. At 181–198 (RWRQGTRERMGLYTFLET) the chain is on the cytoplasmic side. A helical transmembrane segment spans residues 199–219 (VCVYGYSLFVFIPTVVLWLIP). The Lumenal segment spans residues 220–226 (VQWLQWL). A helical transmembrane segment spans residues 227-247 (FGALALALSAAGLVFTLWPVV). The Cytoplasmic segment spans residues 248–252 (REDTR). A helical transmembrane segment spans residues 253–273 (LVAAALLSIVVLLHALLALGC). Topologically, residues 274-311 (KLYFFQPLPLDHVVPAPQAIPPSPNVLLPSSVQPMTTF) are lumenal.

Belongs to the YIP1 family. As to quaternary structure, interacts with YIPF6; this interaction may stabilize YIPF2. May also form a ternary complex with YIPF1 and YIPF6.

The protein localises to the golgi apparatus. It localises to the cis-Golgi network membrane. It is found in the trans-Golgi network membrane. Its subcellular location is the late endosome membrane. The protein is Protein YIPF2 (Yipf2) of Rattus norvegicus (Rat).